A 763-amino-acid polypeptide reads, in one-letter code: Heat shock 70 kDa protein 16 (763 aa).

Disordered stretches follow at residues 509–529 and 701–763; these read ISEE…PSSG and EKTT…MELD. At serine 528 the chain carries Phosphoserine. Residues 701–714 show a composition bias toward basic and acidic residues; the sequence is EKTTEQESLPKDAN.

This sequence belongs to the heat shock protein 70 (TC 1.A.33) family. HSP110/SSE subfamily.

This is Heat shock 70 kDa protein 16 (HSP70-16) from Arabidopsis thaliana (Mouse-ear cress).